The following is a 137-amino-acid chain: uncharacterized protein (137 aa).

Residues 1 to 32 form a disordered region; sequence MRDHLPPGLPPDPFADDPCDPSAALDAVEPGQ.

To M.tuberculosis Rv3412.

This is an uncharacterized protein from Mycobacterium leprae (strain TN).